The following is a 388-amino-acid chain: Alanine racemase 3 (388 aa).

Lys41 (proton acceptor; specific for D-alanine) is an active-site residue. Lys41 bears the N6-(pyridoxal phosphate)lysine mark. Arg135 serves as a coordination point for substrate. The active-site Proton acceptor; specific for L-alanine is Tyr256. Residue Met304 participates in substrate binding.

The protein belongs to the alanine racemase family. Requires pyridoxal 5'-phosphate as cofactor.

It carries out the reaction L-alanine = D-alanine. Its pathway is amino-acid biosynthesis; D-alanine biosynthesis; D-alanine from L-alanine: step 1/1. Catalyzes the interconversion of L-alanine and D-alanine. May also act on other amino acids. This is Alanine racemase 3 (alr3) from Mesorhizobium japonicum (strain LMG 29417 / CECT 9101 / MAFF 303099) (Mesorhizobium loti (strain MAFF 303099)).